Here is a 318-residue protein sequence, read N- to C-terminus: Transaldolase (318 aa).

Residue Lys131 is the Schiff-base intermediate with substrate of the active site.

The protein belongs to the transaldolase family. Type 1 subfamily. As to quaternary structure, homodimer.

It is found in the cytoplasm. It catalyses the reaction D-sedoheptulose 7-phosphate + D-glyceraldehyde 3-phosphate = D-erythrose 4-phosphate + beta-D-fructose 6-phosphate. The protein operates within carbohydrate degradation; pentose phosphate pathway; D-glyceraldehyde 3-phosphate and beta-D-fructose 6-phosphate from D-ribose 5-phosphate and D-xylulose 5-phosphate (non-oxidative stage): step 2/3. In terms of biological role, transaldolase is important for the balance of metabolites in the pentose-phosphate pathway. This is Transaldolase from Buchnera aphidicola subsp. Cinara cedri (strain Cc).